The primary structure comprises 461 residues: Cysteine--tRNA ligase (461 aa).

C28 contacts Zn(2+). The short motif at 30 to 40 is the 'HIGH' region element; the sequence is ITVYDLCHIGH. C209, H234, and E238 together coordinate Zn(2+). Positions 266–270 match the 'KMSKS' region motif; that stretch reads KMSKS. Position 269 (K269) interacts with ATP.

The protein belongs to the class-I aminoacyl-tRNA synthetase family. As to quaternary structure, monomer. Zn(2+) serves as cofactor.

It is found in the cytoplasm. It catalyses the reaction tRNA(Cys) + L-cysteine + ATP = L-cysteinyl-tRNA(Cys) + AMP + diphosphate. The sequence is that of Cysteine--tRNA ligase from Cronobacter sakazakii (strain ATCC BAA-894) (Enterobacter sakazakii).